The primary structure comprises 89 residues: Cell division topological specificity factor (89 aa).

It belongs to the MinE family.

Prevents the cell division inhibition by proteins MinC and MinD at internal division sites while permitting inhibition at polar sites. This ensures cell division at the proper site by restricting the formation of a division septum at the midpoint of the long axis of the cell. The polypeptide is Cell division topological specificity factor (Serratia proteamaculans (strain 568)).